The primary structure comprises 473 residues: Zinc transporter SLC39A7 (473 aa).

The helical transmembrane segment at 11–31 (VAVGLLTWAALGLLVAGHGGH) threads the bilayer. Composition is skewed to basic and acidic residues over residues 44 to 56 (GHSHRHSHEDFHH) and 66 to 114 (HTHE…EHSH). Residues 44–120 (GHSHRHSHED…EHSHGGYGES (77 aa)) are disordered. His66 is subject to Pros-methylhistidine. A run of 3 helical transmembrane segments spans residues 138–158 (ALGATVLISAAPFFVLFLIPV), 169–189 (LQILLSFASGGLLGDAFLHLI), and 214–234 (GPILSVGLWVLSGIVAFLVVE). The tract at residues 243–316 (GHEHSHGHGH…QHSGEEKAGS (74 aa)) is disordered. Phosphoserine is present on residues Ser278 and Ser279. The span at 298-316 (RPKDGPVRPQHSGEEKAGS) shows a compositional bias: basic and acidic residues. Residues 388 to 408 (LLTAVGALAGTAFALLTEGGA) form a helical membrane-spanning segment. Positions 428-473 (GDQAATQASPRSTSLPPVGEEDFREDPGPRQKGQQEKSGINVNCVS) are disordered. Positions 431 to 442 (AATQASPRSTSL) are enriched in polar residues. Residues 452–462 (EDPGPRQKGQQ) are compositionally biased toward basic and acidic residues. The segment covering 463–473 (EKSGINVNCVS) has biased composition (polar residues).

It belongs to the ZIP transporter (TC 2.A.5) family. KE4/Catsup subfamily. As to quaternary structure, homodimer. Methylation at some His residue by METTL9 leads to reduced zinc-binding. In terms of processing, rapidly phosphorylated by CK2 following Zn(2+) treatment. This phosphorylation is required for efficient cytosolic Zn(2+) release.

It localises to the endoplasmic reticulum membrane. Its subcellular location is the golgi apparatus. The protein localises to the cis-Golgi network membrane. The enzyme catalyses Zn(2+)(in) = Zn(2+)(out). In terms of biological role, transports Zn(2+) from the endoplasmic reticulum (ER)/Golgi apparatus to the cytosol, playing an essential role in the regulation of cytosolic zinc levels. Acts as a gatekeeper of zinc release from intracellular stores, requiring post-translational activation by phosphorylation on residues, resulting in activation of multiple downstream pathways leading to cell growth and proliferation. Has an essential role in B cell development and is required for proper B cell receptor signaling. Plays an important role in maintaining intestinal epithelial homeostasis and skin dermis development by regulating ER function. Controls cell signaling pathways involved in glucose metabolism in skeletal muscle. Has a protective role against ER stress in different biological contexts. Mediates Zn(2+)-induced ferroptosis. The protein is Zinc transporter SLC39A7 (SLC39A7) of Sus scrofa (Pig).